Consider the following 163-residue polypeptide: IQ domain-containing protein F2 (163 aa).

IQ domains follow at residues 42–71 (RVIA…STWI) and 98–127 (RERA…AIYV).

In Bos taurus (Bovine), this protein is IQ domain-containing protein F2 (IQCF2).